The following is a 148-amino-acid chain: Large ribosomal subunit protein uL11 (148 aa).

The interval glutamate 89–threonine 108 is disordered.

Belongs to the universal ribosomal protein uL11 family. In terms of assembly, part of the ribosomal stalk of the 50S ribosomal subunit. Interacts with L10 and the large rRNA to form the base of the stalk. L10 forms an elongated spine to which L12 dimers bind in a sequential fashion forming a multimeric L10(L12)X complex. In terms of processing, one or more lysine residues are methylated.

Functionally, forms part of the ribosomal stalk which helps the ribosome interact with GTP-bound translation factors. The protein is Large ribosomal subunit protein uL11 of Anaeromyxobacter dehalogenans (strain 2CP-1 / ATCC BAA-258).